Reading from the N-terminus, the 294-residue chain is uncharacterized protein (294 aa).

A helical membrane pass occupies residues 5–25 (ILIILIIIIIVIISLIYLKNF). N-linked (GlcNAc...) asparagine; by host glycans are attached at residues Asn151, Asn170, Asn205, and Asn271.

The protein resides in the membrane. This is an uncharacterized protein from Acanthamoeba polyphaga (Amoeba).